The primary structure comprises 465 residues: Tapasin (465 aa).

Positions 1–23 are cleaved as a signal peptide; sequence MKPLLLLVAVALGLATVVSVVSA. Topologically, residues 24-416 are lumenal; the sequence is GPEAIECWFV…GFSGPSIEDG (393 aa). Cysteines 30 and 94 form a disulfide. The N-linked (GlcNAc...) asparagine glycan is linked to Asn-256. Residues 295-402 form the Ig-like C1-type domain; that stretch reads PRVSLTPAPV…PASGRSADVT (108 aa). Cysteines 318 and 385 form a disulfide. The helical transmembrane segment at 417-437 threads the bilayer; sequence IGLFLSAFLLLGLLKVLGWLA. The Cytoplasmic segment spans residues 438–465; sequence AYWTIPEVSKEKATAASLTIPRNSKKSQ.

Heterodimer with PDIA3; disulfide-linked. Obligatory mediator for the interaction between newly assembled MHC class I molecules, calreticulin, PDIA3 and TAP. Up to 4 MHC class I/tapasin complexes bind to 1 TAP. Interacts with HLA-G-B2M complex; this interaction is required for loading of high affinity peptides. On its own or as part of MHC class I peptide loading complex, interacts with ligand-free MR1 or MR1-B2M complex, providing for stable MR1 pools ready for metabolite antigen processing.

It localises to the endoplasmic reticulum membrane. Its function is as follows. Involved in the association of MHC class I with transporter associated with antigen processing (TAP) and in the assembly of MHC class I with peptide (peptide loading). The sequence is that of Tapasin (Tapbp) from Mus musculus (Mouse).